Reading from the N-terminus, the 350-residue chain is Protein RecA (350 aa).

ATP is bound at residue Gly67 to Thr74.

It belongs to the RecA family.

It localises to the cytoplasm. In terms of biological role, can catalyze the hydrolysis of ATP in the presence of single-stranded DNA, the ATP-dependent uptake of single-stranded DNA by duplex DNA, and the ATP-dependent hybridization of homologous single-stranded DNAs. It interacts with LexA causing its activation and leading to its autocatalytic cleavage. This Baumannia cicadellinicola subsp. Homalodisca coagulata protein is Protein RecA.